The primary structure comprises 243 residues: Glucosamine-6-phosphate deaminase (243 aa).

Residue Asp67 is the Proton acceptor; for enolization step of the active site. Residue Asn137 is the For ring-opening step of the active site. His139 acts as the Proton acceptor; for ring-opening step in catalysis. Glu144 serves as the catalytic For ring-opening step.

It belongs to the glucosamine/galactosamine-6-phosphate isomerase family. NagB subfamily.

It catalyses the reaction alpha-D-glucosamine 6-phosphate + H2O = beta-D-fructose 6-phosphate + NH4(+). It functions in the pathway amino-sugar metabolism; N-acetylneuraminate degradation; D-fructose 6-phosphate from N-acetylneuraminate: step 5/5. Catalyzes the reversible isomerization-deamination of glucosamine 6-phosphate (GlcN6P) to form fructose 6-phosphate (Fru6P) and ammonium ion. This Staphylococcus epidermidis (strain ATCC 35984 / DSM 28319 / BCRC 17069 / CCUG 31568 / BM 3577 / RP62A) protein is Glucosamine-6-phosphate deaminase.